The sequence spans 152 residues: Small ribosomal subunit protein uS15 (152 aa).

The span at 1–10 (MAKMHTRTKG) shows a compositional bias: basic residues. The interval 1–26 (MAKMHTRTKGKSGSTKPIRSESPAWS) is disordered. Positions 11-26 (KSGSTKPIRSESPAWS) are enriched in polar residues.

Belongs to the universal ribosomal protein uS15 family. As to quaternary structure, part of the 30S ribosomal subunit.

The sequence is that of Small ribosomal subunit protein uS15 from Methanococcoides burtonii (strain DSM 6242 / NBRC 107633 / OCM 468 / ACE-M).